Reading from the N-terminus, the 324-residue chain is MFCGEYVQGTIFPAPNFNPMMDAQMLGGALQGFDCNKDMLIDILTQRSNAQRQMIAGTYQSMYGRDLISVLKEQLSSHFKEVMVGLMYPPPSYDAHELWHAMKGPGTDENCLIEILASRTNGEIFQMREAYCLQYSNNLQEDIYSETSGHFRDTLMNLVQANREEGYSDPAMAAQDAMVLWEACQQKTGEHKTMMQMILCNKSYPQLWLVFQEFQNISGQDLVDAINDCYDGYFQELLVAIVRCIQDKPSYFAYKLYRAIHDFGFHNKTVIRILIARSEIDLMTIRKRYKERFGKSLFHDIKNFASGHYEKALLAICAGDVEDY.

Annexin repeat units follow at residues 17-88 (FNPM…GLMY), 89-160 (PPPS…NLVQ), 171-243 (AMAA…AIVR), and 247-318 (DKPS…AICA).

Belongs to the annexin family.

The polypeptide is Annexin A10 (Anxa10) (Mus musculus (Mouse)).